A 594-amino-acid chain; its full sequence is UvrABC system protein C (594 aa).

The 78-residue stretch at 14–91 (DQPGCYLMKD…IKKYDPKYNI (78 aa)) folds into the GIY-YIG domain. A UVR domain is found at 196 to 231 (KEIRSELETKMYEASEKLEFERAKELRDQIAHIDAI).

The protein belongs to the UvrC family. In terms of assembly, interacts with UvrB in an incision complex.

The protein resides in the cytoplasm. Its function is as follows. The UvrABC repair system catalyzes the recognition and processing of DNA lesions. UvrC both incises the 5' and 3' sides of the lesion. The N-terminal half is responsible for the 3' incision and the C-terminal half is responsible for the 5' incision. The protein is UvrABC system protein C of Bacillus mycoides (strain KBAB4) (Bacillus weihenstephanensis).